The following is a 406-amino-acid chain: Imidazolonepropionase (406 aa).

Fe(3+) is bound by residues His72 and His74. The Zn(2+) site is built by His72 and His74. The 4-imidazolone-5-propanoate site is built by Arg81, Tyr144, and His177. Tyr144 serves as a coordination point for N-formimidoyl-L-glutamate. Residue His242 coordinates Fe(3+). His242 serves as a coordination point for Zn(2+). Gln245 lines the 4-imidazolone-5-propanoate pocket. Asp317 is a binding site for Fe(3+). Residue Asp317 coordinates Zn(2+). The N-formimidoyl-L-glutamate site is built by Asn319 and Gly321. Thr322 is a binding site for 4-imidazolone-5-propanoate.

The protein belongs to the metallo-dependent hydrolases superfamily. HutI family. It depends on Zn(2+) as a cofactor. Fe(3+) is required as a cofactor.

Its subcellular location is the cytoplasm. The enzyme catalyses 4-imidazolone-5-propanoate + H2O = N-formimidoyl-L-glutamate. The protein operates within amino-acid degradation; L-histidine degradation into L-glutamate; N-formimidoyl-L-glutamate from L-histidine: step 3/3. In terms of biological role, catalyzes the hydrolytic cleavage of the carbon-nitrogen bond in imidazolone-5-propanoate to yield N-formimidoyl-L-glutamate. It is the third step in the universal histidine degradation pathway. The polypeptide is Imidazolonepropionase (Yersinia pestis bv. Antiqua (strain Antiqua)).